The primary structure comprises 281 residues: Pantothenate synthetase (281 aa).

Residue 26 to 33 (MGYLHQGH) participates in ATP binding. His33 serves as the catalytic Proton donor. Gln57 is a (R)-pantoate binding site. Gln57 contributes to the beta-alanine binding site. 143 to 146 (GQKD) serves as a coordination point for ATP. Gln149 is a (R)-pantoate binding site. ATP is bound by residues Val172 and 180-183 (LSSR).

This sequence belongs to the pantothenate synthetase family. In terms of assembly, homodimer.

The protein resides in the cytoplasm. It catalyses the reaction (R)-pantoate + beta-alanine + ATP = (R)-pantothenate + AMP + diphosphate + H(+). It functions in the pathway cofactor biosynthesis; (R)-pantothenate biosynthesis; (R)-pantothenate from (R)-pantoate and beta-alanine: step 1/1. Catalyzes the condensation of pantoate with beta-alanine in an ATP-dependent reaction via a pantoyl-adenylate intermediate. This chain is Pantothenate synthetase, found in Chloroflexus aurantiacus (strain ATCC 29366 / DSM 635 / J-10-fl).